Reading from the N-terminus, the 536-residue chain is Lysosomal acid glucosylceramidase (536 aa).

A signal peptide spans 1 to 39 (MELSSPSREEYPMPRGRVGIMAASLMGLLLLHTVSWVSG). 2 cysteine pairs are disulfide-bonded: Cys43-Cys55 and Cys57-Cys62. N-linked (GlcNAc...) asparagine glycans are attached at residues Asn58, Asn98, Asn185, and Asn208. Glu274 acts as the Proton donor in catalysis. Asn309 carries an N-linked (GlcNAc...) asparagine glycan. Residue Glu379 is the Nucleophile of the active site. N-linked (GlcNAc...) asparagine glycosylation is present at Asn501.

Belongs to the glycosyl hydrolase 30 family. Interacts with saposin-C. Interacts with SCARB2. Interacts with TCP1. Interacts with GRN; this interaction prevents aggregation of GBA1-SCARB2 complex via interaction with HSPA1A upon stress.

Its subcellular location is the lysosome membrane. It carries out the reaction a beta-D-glucosyl-(1&lt;-&gt;1')-N-acylsphing-4-enine + H2O = an N-acylsphing-4-enine + D-glucose. The catalysed reaction is a beta-D-galactosyl-(1&lt;-&gt;1')-N-acylsphing-4-enine + H2O = an N-acylsphing-4-enine + D-galactose. It catalyses the reaction cholesteryl 3-beta-D-glucoside + H2O = cholesterol + D-glucose. The enzyme catalyses a beta-D-glucosyl-(1&lt;-&gt;1')-N-acylsphing-4-enine + cholesterol = cholesteryl 3-beta-D-glucoside + an N-acylsphing-4-enine. It carries out the reaction beta-D-glucosyl-N-(9Z-octadecenoyl)-sphing-4E-enine + cholesterol = N-(9Z-octadecenoyl)-sphing-4-enine + cholesteryl 3-beta-D-glucoside. The catalysed reaction is beta-D-glucosyl-N-octanoylsphing-4E-enine + cholesterol = N-octanoylsphing-4-enine + cholesteryl 3-beta-D-glucoside. It catalyses the reaction beta-D-glucosyl-N-dodecanoylsphing-4-enine + cholesterol = N-dodecanoylsphing-4-enine + cholesteryl 3-beta-D-glucoside. The enzyme catalyses beta-D-glucosyl-(1&lt;-&gt;1)-N-octadecanoylsphing-4-enine + cholesterol = N-octadecanoylsphing-4-enine + cholesteryl 3-beta-D-glucoside. It carries out the reaction beta-D-glucosyl-(1&lt;-&gt;1')-N-(15Z-tetracosenoyl)-sphing-4-enine + cholesterol = N-(15Z-tetracosenoyl)-sphing-4-enine + cholesteryl 3-beta-D-glucoside. The catalysed reaction is a beta-D-galactosyl-(1&lt;-&gt;1')-N-acylsphing-4-enine + cholesterol = cholesteryl 3-beta-D-galactoside + an N-acylsphing-4-enine. It catalyses the reaction 1-(beta-D-galactosyl)-N-dodecanoylsphing-4-enine + cholesterol = cholesteryl 3-beta-D-galactoside + N-dodecanoylsphing-4-enine. The enzyme catalyses a beta-D-xylosyl-(1&lt;-&gt;1')-N-acylsphing-4-enine + cholesterol = cholesteryl 3-beta-D-xyloside + an N-acylsphing-4-enine. It carries out the reaction beta-D-xylosyl-(1&lt;-&gt;1')-N-(9Z-octadecenoyl)-sphing-4-enine + cholesterol = cholesteryl 3-beta-D-xyloside + N-(9Z-octadecenoyl)-sphing-4-enine. Its pathway is steroid metabolism; cholesterol metabolism. It participates in sphingolipid metabolism. Its function is as follows. Glucosylceramidase that catalyzes, within the lysosomal compartment, the hydrolysis of glucosylceramides/GlcCers (such as beta-D-glucosyl-(1&lt;-&gt;1')-N-acylsphing-4-enine) into free ceramides (such as N-acylsphing-4-enine) and glucose. Plays a central role in the degradation of complex lipids and the turnover of cellular membranes. Through the production of ceramides, participates in the PKC-activated salvage pathway of ceramide formation. Catalyzes the glucosylation of cholesterol, through a transglucosylation reaction where glucose is transferred from GlcCer to cholesterol. GlcCer containing mono-unsaturated fatty acids (such as beta-D-glucosyl-N-(9Z-octadecenoyl)-sphing-4-enine) are preferred as glucose donors for cholesterol glucosylation when compared with GlcCer containing same chain length of saturated fatty acids (such as beta-D-glucosyl-N-octadecanoyl-sphing-4-enine). Under specific conditions, may alternatively catalyze the reverse reaction, transferring glucose from cholesteryl 3-beta-D-glucoside to ceramide. Can also hydrolyze cholesteryl 3-beta-D-glucoside producing glucose and cholesterol. Catalyzes the hydrolysis of galactosylceramides/GalCers (such as beta-D-galactosyl-(1&lt;-&gt;1')-N-acylsphing-4-enine), as well as the transfer of galactose between GalCers and cholesterol in vitro, but with lower activity than with GlcCers. Contrary to GlcCer and GalCer, xylosylceramide/XylCer (such as beta-D-xyosyl-(1&lt;-&gt;1')-N-acylsphing-4-enine) is not a good substrate for hydrolysis, however it is a good xylose donor for transxylosylation activity to form cholesteryl 3-beta-D-xyloside. The chain is Lysosomal acid glucosylceramidase (GBA1) from Bos taurus (Bovine).